The following is a 226-amino-acid chain: Triosephosphate isomerase (226 aa).

Position 12–14 (12–14 (NFK)) interacts with substrate. Residue His96 is the Electrophile of the active site. Glu144 acts as the Proton acceptor in catalysis. Residues Ile149, Gly184, and 205–206 (AS) each bind substrate.

It belongs to the triosephosphate isomerase family. Homotetramer; dimer of dimers.

The protein resides in the cytoplasm. The enzyme catalyses D-glyceraldehyde 3-phosphate = dihydroxyacetone phosphate. The protein operates within carbohydrate biosynthesis; gluconeogenesis. Its pathway is carbohydrate degradation; glycolysis; D-glyceraldehyde 3-phosphate from glycerone phosphate: step 1/1. Involved in the gluconeogenesis. Catalyzes stereospecifically the conversion of dihydroxyacetone phosphate (DHAP) to D-glyceraldehyde-3-phosphate (G3P). This chain is Triosephosphate isomerase, found in Thermococcus kodakarensis (strain ATCC BAA-918 / JCM 12380 / KOD1) (Pyrococcus kodakaraensis (strain KOD1)).